Here is a 658-residue protein sequence, read N- to C-terminus: Glycogen debranching enzyme (658 aa).

Catalysis depends on aspartate 336, which acts as the Nucleophile. Glutamate 371 (proton donor) is an active-site residue. The interval 459–484 is disordered; the sequence is EANGEENRDGTNSNYSDNHGKEGLGG.

Belongs to the glycosyl hydrolase 13 family.

It catalyses the reaction Hydrolysis of (1-&gt;6)-alpha-D-glucosidic linkages to branches with degrees of polymerization of three or four glucose residues in limit dextrin.. The protein operates within glycan degradation; glycogen degradation. Removes maltotriose and maltotetraose chains that are attached by 1,6-alpha-linkage to the limit dextrin main chain, generating a debranched limit dextrin. This chain is Glycogen debranching enzyme, found in Salmonella paratyphi B (strain ATCC BAA-1250 / SPB7).